The primary structure comprises 434 residues: Acyl transferase 15 (434 aa).

Residues His-164 and Asp-371 each act as proton acceptor in the active site.

It belongs to the plant acyltransferase family.

Involved in the incorporation of ferulate into the cell wall. The chain is Acyl transferase 15 from Oryza sativa subsp. japonica (Rice).